A 283-amino-acid polypeptide reads, in one-letter code: Extracellular metalloprotease MGG_08041 (283 aa).

The first 22 residues, 1–22 (MQINVVKTFLFALAASSVSALA), serve as a signal peptide directing secretion. N-linked (GlcNAc...) asparagine glycosylation occurs at Asn55. His197 lines the Zn(2+) pocket. Glu198 is a catalytic residue. Residue His201 coordinates Zn(2+). Residues Cys233 and Cys260 are joined by a disulfide bond.

This sequence belongs to the peptidase M43B family.

It is found in the secreted. Its function is as follows. Secreted metalloproteinase that allows assimilation of proteinaceous substrates. The protein is Extracellular metalloprotease MGG_08041 of Pyricularia oryzae (strain 70-15 / ATCC MYA-4617 / FGSC 8958) (Rice blast fungus).